The sequence spans 479 residues: T-box transcription factor TBX1 (479 aa).

Low complexity-rich tracts occupy residues 15–31 and 59–86; these read ASSL…ADPF and YPFA…AAAV. The interval 15-86 is disordered; that stretch reads ASSLSGLGSP…GPGASRAAAV (72 aa). Positions 108 to 286 form a DNA-binding region, T-box; that stretch reads LWDEFNQLGT…SNPFAKGFRD (179 aa). A disordered region spans residues 311-398; that stretch reads RNPVASPTQP…APGASEPLHH (88 aa). Residues 313 to 322 show a composition bias toward polar residues; it reads PVASPTQPNG. Positions 323–338 are enriched in basic and acidic residues; the sequence is SDKDAAEARREFDRDS. The Nuclear localization signal signature appears at 415–426; the sequence is KSRPAPYPLPGL.

Binds DNA as a dimer. Interacts with DSCR6. Interacts with NKX2-5. As to expression, expressed in skeletal muscle, lung and testis. Highly expressed in hair follicle stem cell, but not in terminally differentiating cells.

The protein resides in the nucleus. Transcription factor that plays a key role in cardiovascular development by promoting pharyngeal arch segmentation during embryonic development. Also involved in craniofacial muscle development. Together with NKX2-5, acts as a regulator of asymmetric cardiac morphogenesis by promoting expression of PITX2. Acts upstream of TBX1 for the formation of the thymus and parathyroid glands from the third pharyngeal pouch. Required for hair follicle stem cell self-renewal. Binds to the palindromic T site 5'-TTCACACCTAGGTGTGAA-3' DNA sequence. The polypeptide is T-box transcription factor TBX1 (Mus musculus (Mouse)).